The chain runs to 405 residues: S-adenosylmethionine synthase (405 aa).

His22 provides a ligand contact to ATP. Asp24 is a Mg(2+) binding site. A K(+)-binding site is contributed by Glu50. L-methionine contacts are provided by Glu63 and Gln107. The segment at 107 to 117 is flexible loop; the sequence is QSPDIAQGVNR. Residues 184-186, 250-251, Asp259, 265-266, Ala282, and Lys286 contribute to the ATP site; these read DGK, RF, and RK. Asp259 provides a ligand contact to L-methionine. Lys290 provides a ligand contact to L-methionine.

The protein belongs to the AdoMet synthase family. Homotetramer; dimer of dimers. The cofactor is Mg(2+). K(+) serves as cofactor.

It is found in the cytoplasm. The catalysed reaction is L-methionine + ATP + H2O = S-adenosyl-L-methionine + phosphate + diphosphate. Its pathway is amino-acid biosynthesis; S-adenosyl-L-methionine biosynthesis; S-adenosyl-L-methionine from L-methionine: step 1/1. Catalyzes the formation of S-adenosylmethionine (AdoMet) from methionine and ATP. The overall synthetic reaction is composed of two sequential steps, AdoMet formation and the subsequent tripolyphosphate hydrolysis which occurs prior to release of AdoMet from the enzyme. This is S-adenosylmethionine synthase from Roseiflexus castenholzii (strain DSM 13941 / HLO8).